The following is a 282-amino-acid chain: Pantothenate synthetase (282 aa).

30–37 (MGALHAGH) contacts ATP. The active-site Proton donor is the His-37. Gln-61 is a (R)-pantoate binding site. Gln-61 contacts beta-alanine. An ATP-binding site is contributed by 147–150 (GEKD). Gln-153 contributes to the (R)-pantoate binding site. ATP contacts are provided by residues Val-176 and 184 to 187 (LSSR).

This sequence belongs to the pantothenate synthetase family. Homodimer.

It localises to the cytoplasm. It carries out the reaction (R)-pantoate + beta-alanine + ATP = (R)-pantothenate + AMP + diphosphate + H(+). The protein operates within cofactor biosynthesis; (R)-pantothenate biosynthesis; (R)-pantothenate from (R)-pantoate and beta-alanine: step 1/1. Functionally, catalyzes the condensation of pantoate with beta-alanine in an ATP-dependent reaction via a pantoyl-adenylate intermediate. The chain is Pantothenate synthetase from Bacteroides fragilis (strain ATCC 25285 / DSM 2151 / CCUG 4856 / JCM 11019 / LMG 10263 / NCTC 9343 / Onslow / VPI 2553 / EN-2).